The primary structure comprises 427 residues: N-myc proto-oncogene protein (427 aa).

Disordered regions lie at residues 45-79 (FELLPTPPLSPSRPAPGAPSGRGPGAVGRSGSVGL), 144-173 (EKLQNKTPAAPPPPPGTAGSPPVPARSGRA), 195-255 (AAEG…STNK), and 297-349 (APSP…RNHN). 2 stretches are compositionally biased toward pro residues: residues 49 to 61 (PTPPLSPSRPAPG) and 152 to 167 (AAPPPPPGTAGSPPVP). Residues 210 to 221 (RASSSSSSSGDD) show a composition bias toward low complexity. Residues 222–242 (TLSDSEDDEDEEEEDEEEEID) are compositionally biased toward acidic residues. A phosphoserine; by CK2 mark is found at Ser-224 and Ser-226. The region spanning 343-396 (ERRRNHNILERQRANDLRSSFLTLRDHVLSELVQNEKAAKVVILKKATEYVHSL) is the bHLH domain. The leucine-zipper stretch occupies residues 396 to 417 (LQAEEQKLLLEKEKLQARQEQL).

In terms of assembly, efficient DNA binding requires dimerization with another bHLH protein. Binds DNA as a heterodimer with MAX.

Its subcellular location is the nucleus. In Serinus canaria (Island canary), this protein is N-myc proto-oncogene protein (MYCN).